A 192-amino-acid chain; its full sequence is Imidazoleglycerol-phosphate dehydratase (192 aa).

The protein belongs to the imidazoleglycerol-phosphate dehydratase family.

It is found in the cytoplasm. The enzyme catalyses D-erythro-1-(imidazol-4-yl)glycerol 3-phosphate = 3-(imidazol-4-yl)-2-oxopropyl phosphate + H2O. It participates in amino-acid biosynthesis; L-histidine biosynthesis; L-histidine from 5-phospho-alpha-D-ribose 1-diphosphate: step 6/9. This chain is Imidazoleglycerol-phosphate dehydratase, found in Hydrogenobaculum sp. (strain Y04AAS1).